The sequence spans 121 residues: Holo-[acyl-carrier-protein] synthase (121 aa).

Positions 8 and 58 each coordinate Mg(2+).

The protein belongs to the P-Pant transferase superfamily. AcpS family. Homotrimer. The cofactor is Mg(2+).

The protein localises to the cytoplasm. It catalyses the reaction apo-[ACP] + CoA = holo-[ACP] + adenosine 3',5'-bisphosphate + H(+). Its function is as follows. Transfers the 4'-phosphopantetheine moiety from coenzyme A to a Ser of fatty acid acyl-carrier-protein ACP. Also modifies the D-alanyl carrier protein but fails to recognize PCP and AcpK, an acyl carrier protein of secondary metabolism. In Bacillus subtilis (strain 168), this protein is Holo-[acyl-carrier-protein] synthase.